Consider the following 239-residue polypeptide: Uridylate kinase (239 aa).

An ATP-binding site is contributed by 12-15 (KLSG). The segment at 20–25 (GEKGFG) is involved in allosteric activation by GTP. Residue G54 coordinates UMP. Residues G55 and R59 each contribute to the ATP site. Residues D72 and 133-140 (TGNPFFST) contribute to the UMP site. Y166 and D169 together coordinate ATP.

It belongs to the UMP kinase family. As to quaternary structure, homohexamer.

Its subcellular location is the cytoplasm. It carries out the reaction UMP + ATP = UDP + ADP. It functions in the pathway pyrimidine metabolism; CTP biosynthesis via de novo pathway; UDP from UMP (UMPK route): step 1/1. Its activity is regulated as follows. Allosterically activated by GTP. Inhibited by UTP. Catalyzes the reversible phosphorylation of UMP to UDP. The polypeptide is Uridylate kinase (Caldicellulosiruptor saccharolyticus (strain ATCC 43494 / DSM 8903 / Tp8T 6331)).